The sequence spans 236 residues: UPF0257 lipoprotein YnfC (236 aa).

The signal sequence occupies residues 1–16 (MKKPLLLTLLCMILAG). Residue Cys17 is the site of N-palmitoyl cysteine attachment. The S-diacylglycerol cysteine moiety is linked to residue Cys17.

This sequence belongs to the UPF0257 family.

Its subcellular location is the cell membrane. The sequence is that of UPF0257 lipoprotein YnfC from Salmonella dublin (strain CT_02021853).